The following is a 246-amino-acid chain: Apolipoprotein L domain-containing protein 1 (246 aa).

2 helical membrane passes run 50-72 (SLAANVAGSSLSAAGALAAIVGL) and 89-109 (GLGVATAGGAVTITSDLSLIF). A coiled-coil region spans residues 193-220 (LKAKIQKLSESLESCTGALDELSEQLES).

Belongs to the apolipoprotein L family. As to expression, present at low levels in brain vascular cells (at protein level).

Its subcellular location is the cell membrane. It is found in the cell junction. It localises to the cytoplasmic vesicle. The protein localises to the secretory vesicle. Functionally, is a modulator of endothelial barrier permeability, required for proper organization of endothelial cell-cell junctions and cytoskeleton. It also plays a role in the modulation of secretory autophagy. May affect blood-brain barrier permeability. The sequence is that of Apolipoprotein L domain-containing protein 1 (Apold1) from Rattus norvegicus (Rat).